The primary structure comprises 255 residues: Superoxide dismutase [Fe] 2, chloroplastic (255 aa).

The N-terminal 32 residues, 1-32 (MAAFASALRVLPSPPAAVPRRLRSREQRQGCR), are a transit peptide targeting the chloroplast. Residues histidine 67, histidine 119, aspartate 203, and histidine 207 each coordinate Fe cation.

It belongs to the iron/manganese superoxide dismutase family. Homodimer. The cofactor is Fe cation. As to expression, strongly expressed in the stems of the young seedlings, etiolated seedlings and embryogenic calli, but only minimally expressed in the leaves and the roots.

The protein resides in the plastid. Its subcellular location is the chloroplast. The enzyme catalyses 2 superoxide + 2 H(+) = H2O2 + O2. In terms of biological role, destroys superoxide anion radicals which are normally produced within the cells and which are toxic to biological systems. This is Superoxide dismutase [Fe] 2, chloroplastic from Oryza sativa subsp. japonica (Rice).